Reading from the N-terminus, the 195-residue chain is ATP-dependent Clp protease proteolytic subunit 1 (195 aa).

Ser-96 functions as the Nucleophile in the catalytic mechanism. His-121 is an active-site residue.

Belongs to the peptidase S14 family. In terms of assembly, fourteen ClpP subunits assemble into 2 heptameric rings which stack back to back to give a disk-like structure with a central cavity, resembling the structure of eukaryotic proteasomes.

The protein resides in the cytoplasm. It catalyses the reaction Hydrolysis of proteins to small peptides in the presence of ATP and magnesium. alpha-casein is the usual test substrate. In the absence of ATP, only oligopeptides shorter than five residues are hydrolyzed (such as succinyl-Leu-Tyr-|-NHMec, and Leu-Tyr-Leu-|-Tyr-Trp, in which cleavage of the -Tyr-|-Leu- and -Tyr-|-Trp bonds also occurs).. Its function is as follows. Cleaves peptides in various proteins in a process that requires ATP hydrolysis. Has a chymotrypsin-like activity. Plays a major role in the degradation of misfolded proteins. This chain is ATP-dependent Clp protease proteolytic subunit 1, found in Prochlorococcus marinus (strain MIT 9312).